Here is a 456-residue protein sequence, read N- to C-terminus: Gamma-aminobutyric acid receptor subunit alpha-1 (456 aa).

The first 27 residues, 1–27, serve as a signal peptide directing secretion; that stretch reads MKKSPGLSDYLWAWTLFLSTLTGRSYG. The Extracellular segment spans residues 28 to 253; it reads QPSLQDELKD…FHLKRKIGYF (226 aa). N-linked (GlcNAc...) asparagine glycosylation is present at Asn38. Residue Arg94 coordinates 4-aminobutanoate. N-linked (GlcNAc...) asparagine glycosylation occurs at Asn138. Thr157 contributes to the 4-aminobutanoate binding site. The cysteines at positions 166 and 180 are disulfide-linked. Residues 254–274 form a helical membrane-spanning segment; it reads VIQTYLPCIMTVILSQVSFWL. The Cytoplasmic segment spans residues 275–279; it reads NRESV. Residues 280–301 form a helical membrane-spanning segment; sequence PARTVFGVTTVLTMTTLSISAR. Over 302–311 the chain is Extracellular; it reads NSLPKVAYAT. A helical transmembrane segment spans residues 312-333; sequence AMDWFIAVCYAFVFSALIEFAT. Over 334–421 the chain is Cytoplasmic; sequence VNYFTKRGYA…TFNSVSKIDR (88 aa). Residues 422-441 form a helical membrane-spanning segment; sequence LSRIAFPLLFGIFNLVYWAT. Topologically, residues 442 to 456 are extracellular; sequence YLNREPQLKAPTPHQ.

Belongs to the ligand-gated ion channel (TC 1.A.9) family. Gamma-aminobutyric acid receptor (TC 1.A.9.5) subfamily. GABRA1 sub-subfamily. In terms of assembly, heteropentamer, formed by a combination of alpha (GABRA1-6), beta (GABRB1-3), gamma (GABRG1-3), delta (GABRD), epsilon (GABRE), rho (GABRR1-3), pi (GABRP) and theta (GABRQ) subunits, each subunit exhibiting distinct physiological and pharmacological properties. Interacts with UBQLN1. Interacts with TRAK1. Interacts with KIF21B. Identified in a complex of 720 kDa composed of LHFPL4, NLGN2, GABRA1, GABRB2, GABRG2 and GABRB3. Interacts with LHFPL4. Interacts with NLGN2. Interacts with SHISA7; interaction leads to the regulation of GABA(A) receptor trafficking, channel deactivation kinetics and pharmacology. In terms of tissue distribution, cerebellar granule cells, Purkinje cells and stellate/basket cells.

The protein resides in the postsynaptic cell membrane. Its subcellular location is the cell membrane. The protein localises to the cytoplasmic vesicle membrane. It catalyses the reaction chloride(in) = chloride(out). With respect to regulation, allosterically activated by benzodiazepines, the neuroanesthetic alphaxalone and pentobarbital. Inhibited by the antagonist bicuculline. Potentiated by histamine. In terms of biological role, alpha subunit of the heteropentameric ligand-gated chloride channel gated by gamma-aminobutyric acid (GABA), a major inhibitory neurotransmitter in the brain. GABA-gated chloride channels, also named GABA(A) receptors (GABAAR), consist of five subunits arranged around a central pore and contain GABA active binding site(s) located at the alpha and beta subunit interface(s). When activated by GABA, GABAARs selectively allow the flow of chloride anions across the cell membrane down their electrochemical gradient. Alpha-1/GABRA1-containing GABAARs are largely synaptic. Chloride influx into the postsynaptic neuron following GABAAR opening decreases the neuron ability to generate a new action potential, thereby reducing nerve transmission. GABAARs containing alpha-1 and beta-2 or -3 subunits exhibit synaptogenic activity; the gamma-2 subunit being necessary but not sufficient to induce rapid synaptic contacts formation. GABAARs function also as histamine receptor where histamine binds at the interface of two neighboring beta subunits and potentiates GABA response. GABAARs containing alpha, beta and epsilon subunits also permit spontaneous chloride channel activity while preserving the structural information required for GABA-gated openings. Alpha-1-mediated plasticity in the orbitofrontal cortex regulates context-dependent action selection. Together with rho subunits, may also control neuronal and glial GABAergic transmission in the cerebellum. The sequence is that of Gamma-aminobutyric acid receptor subunit alpha-1 (GABRA1) from Bos taurus (Bovine).